A 232-amino-acid chain; its full sequence is Large ribosomal subunit protein uL1 (232 aa).

This sequence belongs to the universal ribosomal protein uL1 family. In terms of assembly, part of the 50S ribosomal subunit.

Binds directly to 23S rRNA. The L1 stalk is quite mobile in the ribosome, and is involved in E site tRNA release. Its function is as follows. Protein L1 is also a translational repressor protein, it controls the translation of the L11 operon by binding to its mRNA. In Bartonella bacilliformis (strain ATCC 35685 / KC583 / Herrer 020/F12,63), this protein is Large ribosomal subunit protein uL1.